The sequence spans 294 residues: ATP phosphoribosyltransferase (294 aa).

The protein belongs to the ATP phosphoribosyltransferase family. Long subfamily. Requires Mg(2+) as cofactor.

Its subcellular location is the cytoplasm. The enzyme catalyses 1-(5-phospho-beta-D-ribosyl)-ATP + diphosphate = 5-phospho-alpha-D-ribose 1-diphosphate + ATP. The protein operates within amino-acid biosynthesis; L-histidine biosynthesis; L-histidine from 5-phospho-alpha-D-ribose 1-diphosphate: step 1/9. Feedback inhibited by histidine. Its function is as follows. Catalyzes the condensation of ATP and 5-phosphoribose 1-diphosphate to form N'-(5'-phosphoribosyl)-ATP (PR-ATP). Has a crucial role in the pathway because the rate of histidine biosynthesis seems to be controlled primarily by regulation of HisG enzymatic activity. The sequence is that of ATP phosphoribosyltransferase from Maricaulis maris (strain MCS10) (Caulobacter maris).